The chain runs to 273 residues: Chaperone protein PsaB (273 aa).

The signal sequence occupies residues 1 to 31; it reads MKNLFFSAYKKVFSYITSIVIFMVSLPYAYS. An intrachain disulfide couples Cys128 to Cys163.

This sequence belongs to the periplasmic pilus chaperone family.

Its subcellular location is the periplasm. Its function is as follows. Required for the biogenesis of the pH 6 antigen. This chain is Chaperone protein PsaB (psaB), found in Yersinia pestis.